We begin with the raw amino-acid sequence, 381 residues long: MNDSLQAIPNQPFSFFTQASCSHTQARAGQFFTPHGVVETPRFMPVGTLANIKTVTPEQLRGTGAQMILANTYHLHLQPGEGIVAAAGGLHRFMGWTGPILTDSGGFQVFSLSELRSIAEAGVTFRSPRDGEEIYLSPEKAIAIQNQLGADVIMAFDECAPYPADRSTVTEAVERTTRWLERCCKAHDRVEDQALFGIIQGGTYGDLRQQSARSLVEFDLPGYAIGGVSVGEPPELIEKIVKFTTPLLPEHKPRYLMGVGTYREMVQAIAAGIDLFDCVIPTRLARHGNALVRGERWNLKNSRFREDFQPLDQSCACYTCQNFSRAYLSHLLRARELLAYTLLSIHNITELISFTQKIRQAILHDRFSSEFASWLTSPSPS.

D103 functions as the Proton acceptor in the catalytic mechanism. Substrate is bound by residues 103–107 (DSGGF), D157, Q200, and G227. Positions 258–264 (GVGTYRE) are RNA binding. Catalysis depends on D277, which acts as the Nucleophile. An RNA binding; important for wobble base 34 recognition region spans residues 282–286 (TRLAR). Zn(2+) is bound by residues C315, C317, C320, and H346.

The protein belongs to the queuine tRNA-ribosyltransferase family. As to quaternary structure, homodimer. Within each dimer, one monomer is responsible for RNA recognition and catalysis, while the other monomer binds to the replacement base PreQ1. Zn(2+) serves as cofactor.

It catalyses the reaction 7-aminomethyl-7-carbaguanine + guanosine(34) in tRNA = 7-aminomethyl-7-carbaguanosine(34) in tRNA + guanine. Its pathway is tRNA modification; tRNA-queuosine biosynthesis. Catalyzes the base-exchange of a guanine (G) residue with the queuine precursor 7-aminomethyl-7-deazaguanine (PreQ1) at position 34 (anticodon wobble position) in tRNAs with GU(N) anticodons (tRNA-Asp, -Asn, -His and -Tyr). Catalysis occurs through a double-displacement mechanism. The nucleophile active site attacks the C1' of nucleotide 34 to detach the guanine base from the RNA, forming a covalent enzyme-RNA intermediate. The proton acceptor active site deprotonates the incoming PreQ1, allowing a nucleophilic attack on the C1' of the ribose to form the product. After dissociation, two additional enzymatic reactions on the tRNA convert PreQ1 to queuine (Q), resulting in the hypermodified nucleoside queuosine (7-(((4,5-cis-dihydroxy-2-cyclopenten-1-yl)amino)methyl)-7-deazaguanosine). The polypeptide is Queuine tRNA-ribosyltransferase (Cyanothece sp. (strain PCC 7425 / ATCC 29141)).